We begin with the raw amino-acid sequence, 257 residues long: Galactitol 2-dehydrogenase (257 aa).

NAD(+) contacts are provided by residues 21 to 23 (RAI), 67 to 68 (DV), N94, Y162, and K166. Y162 acts as the Proton acceptor in catalysis.

Belongs to the short-chain dehydrogenases/reductases (SDR) family. As to quaternary structure, homotetramer. Requires Mg(2+) as cofactor.

It catalyses the reaction galactitol + NAD(+) = keto-D-tagatose + NADH + H(+). Its function is as follows. Catalyzes the oxidation of galactitol to D-tagatose. Also catalyzes the oxidation of a wide range of substrates, including polyvalent aliphatic alcohols and polyols, to the corresponding ketones and ketoses. Galactitol is the preferred substrate. This Rhizobium johnstonii (strain DSM 114642 / LMG 32736 / 3841) (Rhizobium leguminosarum bv. viciae) protein is Galactitol 2-dehydrogenase.